Here is a 171-residue protein sequence, read N- to C-terminus: 3-hydroxydecanoyl-[acyl-carrier-protein] dehydratase (171 aa).

Residue His70 is part of the active site.

The protein belongs to the thioester dehydratase family. FabA subfamily. Homodimer.

The protein localises to the cytoplasm. The catalysed reaction is a (3R)-hydroxyacyl-[ACP] = a (2E)-enoyl-[ACP] + H2O. The enzyme catalyses (3R)-hydroxydecanoyl-[ACP] = (2E)-decenoyl-[ACP] + H2O. It catalyses the reaction (2E)-decenoyl-[ACP] = (3Z)-decenoyl-[ACP]. It participates in lipid metabolism; fatty acid biosynthesis. Its function is as follows. Necessary for the introduction of cis unsaturation into fatty acids. Catalyzes the dehydration of (3R)-3-hydroxydecanoyl-ACP to E-(2)-decenoyl-ACP and then its isomerization to Z-(3)-decenoyl-ACP. Can catalyze the dehydratase reaction for beta-hydroxyacyl-ACPs with saturated chain lengths up to 16:0, being most active on intermediate chain length. The chain is 3-hydroxydecanoyl-[acyl-carrier-protein] dehydratase from Xanthomonas axonopodis pv. citri (strain 306).